The sequence spans 803 residues: Isoamylase 1, chloroplastic (803 aa).

A chloroplast-targeting transit peptide spans 1 to 54 (MASLPHCLSARPLVVAAAPGRPGPGPGPWLRGGARRRNAAFSAGNAGRRVGLRR). Aspartate 432 (nucleophile) is an active-site residue. Glutamate 488 serves as the catalytic Proton donor.

The protein belongs to the glycosyl hydrolase 13 family. As to quaternary structure, forms a homo-pentamer and a hetero-hexamer composed of five ISA1 and one ISA2. Interacts with FLO6/SIP4. In terms of tissue distribution, highly expressed in developing endosperm. Expressed at low levels in leaves.

The protein resides in the plastid. The protein localises to the chloroplast. It catalyses the reaction Hydrolysis of (1-&gt;6)-alpha-D-glucosidic branch linkages in glycogen, amylopectin and their beta-limit dextrins.. Its pathway is glycan biosynthesis; starch biosynthesis. Inhibited by copper chloride, mercury chloride, ammonium molybdate and para-chloromercuribenzoate. Its function is as follows. Starch-debranching enzyme involved in amylopectin biosynthesis in endosperm. Functions by removing excess branches or improper branches that interfere with the formation of double helices of the cluster chains of amylopectin and crystallization of starch. Works as ISA1 homooligomer or together with ISA2 as heterooligomer. The heterooligomer ISA1 and ISA2 possesses higher affinity than the ISA1 homooligomer for various branched polyglucans in vitro, but no marked differences exist in chain preferences for debranching of amylopectin and phytoglycogen between these forms. In Oryza sativa subsp. japonica (Rice), this protein is Isoamylase 1, chloroplastic.